A 258-amino-acid chain; its full sequence is Imidazole glycerol phosphate synthase subunit HisF (258 aa).

Residues Asp-11 and Asp-130 contribute to the active site.

Belongs to the HisA/HisF family. As to quaternary structure, heterodimer of HisH and HisF.

Its subcellular location is the cytoplasm. The catalysed reaction is 5-[(5-phospho-1-deoxy-D-ribulos-1-ylimino)methylamino]-1-(5-phospho-beta-D-ribosyl)imidazole-4-carboxamide + L-glutamine = D-erythro-1-(imidazol-4-yl)glycerol 3-phosphate + 5-amino-1-(5-phospho-beta-D-ribosyl)imidazole-4-carboxamide + L-glutamate + H(+). It functions in the pathway amino-acid biosynthesis; L-histidine biosynthesis; L-histidine from 5-phospho-alpha-D-ribose 1-diphosphate: step 5/9. Its function is as follows. IGPS catalyzes the conversion of PRFAR and glutamine to IGP, AICAR and glutamate. The HisF subunit catalyzes the cyclization activity that produces IGP and AICAR from PRFAR using the ammonia provided by the HisH subunit. The protein is Imidazole glycerol phosphate synthase subunit HisF of Escherichia coli O127:H6 (strain E2348/69 / EPEC).